We begin with the raw amino-acid sequence, 264 residues long: 3-methyl-2-oxobutanoate hydroxymethyltransferase (264 aa).

The Mg(2+) site is built by Asp45 and Asp84. 3-methyl-2-oxobutanoate-binding positions include 45–46 (DS), Asp84, and Lys112. A Mg(2+)-binding site is contributed by Glu114. Glu181 (proton acceptor) is an active-site residue.

The protein belongs to the PanB family. Homodecamer; pentamer of dimers. Mg(2+) is required as a cofactor.

It is found in the cytoplasm. It carries out the reaction 3-methyl-2-oxobutanoate + (6R)-5,10-methylene-5,6,7,8-tetrahydrofolate + H2O = 2-dehydropantoate + (6S)-5,6,7,8-tetrahydrofolate. Its pathway is cofactor biosynthesis; (R)-pantothenate biosynthesis; (R)-pantoate from 3-methyl-2-oxobutanoate: step 1/2. Functionally, catalyzes the reversible reaction in which hydroxymethyl group from 5,10-methylenetetrahydrofolate is transferred onto alpha-ketoisovalerate to form ketopantoate. This is 3-methyl-2-oxobutanoate hydroxymethyltransferase from Shewanella pealeana (strain ATCC 700345 / ANG-SQ1).